The chain runs to 231 residues: Phosphatidate cytidylyltransferase (231 aa).

Helical transmembrane passes span 33–53, 67–87, 95–115, 133–153, 167–187, and 206–226; these read FVVAILWLKPLFYVLMILVAI, IMYLLIGLIIIPIPISLLIFL, WLIMLYFCIVWSVDIFAMIGG, WSGLITGILSAGLVATLISFI, IYLFIISCTLALTAQLSDLFI, and HGGVLDRFDSIILTAPILFFI.

Belongs to the CDS family.

The protein resides in the cell membrane. The catalysed reaction is a 1,2-diacyl-sn-glycero-3-phosphate + CTP + H(+) = a CDP-1,2-diacyl-sn-glycerol + diphosphate. It functions in the pathway phospholipid metabolism; CDP-diacylglycerol biosynthesis; CDP-diacylglycerol from sn-glycerol 3-phosphate: step 3/3. This Rickettsia bellii (strain RML369-C) protein is Phosphatidate cytidylyltransferase (cdsA).